The following is a 218-amino-acid chain: Elongation factor Ts (218 aa).

An involved in Mg(2+) ion dislocation from EF-Tu region spans residues 82–85 (TDFV).

The protein belongs to the EF-Ts family.

It is found in the cytoplasm. Functionally, associates with the EF-Tu.GDP complex and induces the exchange of GDP to GTP. It remains bound to the aminoacyl-tRNA.EF-Tu.GTP complex up to the GTP hydrolysis stage on the ribosome. This chain is Elongation factor Ts, found in Prochlorococcus marinus (strain MIT 9312).